Consider the following 444-residue polypeptide: Tol-Pal system protein TolB (444 aa).

A signal peptide spans 1–18 (MKNIIYCILLLFSFNSYA).

The protein belongs to the TolB family. In terms of assembly, the Tol-Pal system is composed of five core proteins: the inner membrane proteins TolA, TolQ and TolR, the periplasmic protein TolB and the outer membrane protein Pal. They form a network linking the inner and outer membranes and the peptidoglycan layer.

It is found in the periplasm. Part of the Tol-Pal system, which plays a role in outer membrane invagination during cell division and is important for maintaining outer membrane integrity. The sequence is that of Tol-Pal system protein TolB from Rickettsia bellii (strain OSU 85-389).